The sequence spans 85 residues: Putative membrane protein insertion efficiency factor (85 aa).

The protein belongs to the UPF0161 family.

The protein resides in the cell inner membrane. Could be involved in insertion of integral membrane proteins into the membrane. The polypeptide is Putative membrane protein insertion efficiency factor (Shewanella sediminis (strain HAW-EB3)).